The sequence spans 243 residues: Ribonuclease PH (243 aa).

Phosphate-binding positions include Arg-91 and 129-131; that span reads GTR.

The protein belongs to the RNase PH family. As to quaternary structure, homohexameric ring arranged as a trimer of dimers.

It carries out the reaction tRNA(n+1) + phosphate = tRNA(n) + a ribonucleoside 5'-diphosphate. Functionally, phosphorolytic 3'-5' exoribonuclease that plays an important role in tRNA 3'-end maturation. Removes nucleotide residues following the 3'-CCA terminus of tRNAs; can also add nucleotides to the ends of RNA molecules by using nucleoside diphosphates as substrates, but this may not be physiologically important. Probably plays a role in initiation of 16S rRNA degradation (leading to ribosome degradation) during starvation. The polypeptide is Ribonuclease PH (Burkholderia lata (strain ATCC 17760 / DSM 23089 / LMG 22485 / NCIMB 9086 / R18194 / 383)).